The sequence spans 459 residues: Interleukin-7 receptor subunit alpha (459 aa).

The N-terminal stretch at 1–20 (MTILGTTFGVFFSLLQVVSG) is a signal peptide. Topologically, residues 21–241 (ESGYAQNGDL…NNHSGETNPT (221 aa)) are extracellular. A disulfide bridge connects residues Cys42 and Cys57. Asn49 and Asn65 each carry an N-linked (GlcNAc...) asparagine glycan. 2 disulfides stabilise this stretch: Cys74–Cys82 and Cys108–Cys118. The Fibronectin type-III domain maps to 131–231 (APFDLSVIYR…PSYYFRTPEI (101 aa)). N-linked (GlcNAc...) asparagine glycosylation occurs at Asn182. A WSXWS motif motif is present at residues 217–221 (WSEWS). Residues 242–262 (LLTISILSVLSVVLLVILACV) traverse the membrane as a helical segment. The Cytoplasmic portion of the chain corresponds to 263 to 459 (LWKKRIKPII…VTMSSFCQKR (197 aa)). The short motif at 272 to 280 (IWPSLPDHK) is the Box 1 motif element. A Phosphothreonine; by PKC modification is found at Thr282. The segment at 327 to 357 (TVPPQLEESETQRPGGDVQSPSWPSENVVTT) is disordered. The segment covering 345–357 (QSPSWPSENVVTT) has biased composition (polar residues).

Belongs to the type I cytokine receptor family. Type 4 subfamily. In terms of assembly, the IL7 receptor is a heterodimer of IL7R and IL2RG. The TSLP receptor is a heterodimer of CRLF2 and IL7R. Interacts with CD53. Post-translationally, N-glycosylated IL-7Ralpha binds IL7 300-fold more tightly than the unglycosylated form. Ubiquitinated by MARCHF8; leading to lysosomal degradation.

It is found in the cell membrane. Receptor for interleukin-7. Also acts as a receptor for thymic stromal lymphopoietin (TSLP). In Callithrix jacchus (White-tufted-ear marmoset), this protein is Interleukin-7 receptor subunit alpha (IL7R).